A 759-amino-acid polypeptide reads, in one-letter code: MTEPITPEIVAQHGLKPEEYQRILEHLGRTPTLTELGVFSVMWSEHCSYKSSRVHLKTFPTSGPRVLQGPGENAGVVDLGDGLAAAFKMESHNHPSYIEPYQGAATGVGGILRDVFTMGARPIASLNALRFGDPSHPRTAYLLEGVVAGIGGYGNCMGVPTVGGEVAFHPSYNGNCLVNAFTLGILPADKIFRGTAAGVGNPVMYVGAKTGRDGIHGATMASAEFDASTEEKRPTVQVGDPFMEKLLLEACLELFQTDAVVGIQDMGAAGLTSSSVEMAGRGGNGLDLFLDQVPLREEGMTPYEILLSESQERMLLVAAEGKEELVRSICEKWDLDVAVIGRVTASGRWRAHWRGAVVADLPVDPLTEGAPKYHRPMAPHPALPALHAFDAAALPEPADLGAALLRLLARPTIASKEWVYRQYDHMVRLVGAVRPGGDAAVVRLAVSHDAHAHKGIALSVGVNGRFCFLDPYLGAMHAVAECARNIACVGGEPIAITDCLNFGNPEKPEIMWQFAECVRGIGDACRAFGTPVVSGNVSLYNETEGQGILPTPTVGMVGLVEPVERTCHSTFRDAGDVIALVGSLQGEVGGSEYLSAEHGKEAGRPPALDLAREKAVQETVRRAVRAGLLSSAHDCSEGGLAVALAESCMMHEVPADGSKPAWIGCAVRIPFPVRKDFVLFGEDASRILVSLPKENAARFVDLAQQCGAPVIRLGAVGGDRLEIQGALSVPVEDLARAWRDGIPAVLRRDAAHAGTTAPA.

Histidine 46 is a catalytic residue. Positions 49 and 88 each coordinate ATP. Glutamate 90 is a Mg(2+) binding site. Substrate contacts are provided by residues 91–94 and arginine 113; that span reads SHNH. Histidine 92 acts as the Proton acceptor in catalysis. Aspartate 114 contacts Mg(2+). Glutamine 237 is a binding site for substrate. Aspartate 265 contacts Mg(2+). 309 to 311 lines the substrate pocket; that stretch reads ESQ. Residues aspartate 498 and glycine 535 each contribute to the ATP site. Asparagine 536 is a Mg(2+) binding site. Position 538 (serine 538) interacts with substrate.

It belongs to the FGAMS family. In terms of assembly, monomer. Part of the FGAM synthase complex composed of 1 PurL, 1 PurQ and 2 PurS subunits.

The protein localises to the cytoplasm. The catalysed reaction is N(2)-formyl-N(1)-(5-phospho-beta-D-ribosyl)glycinamide + L-glutamine + ATP + H2O = 2-formamido-N(1)-(5-O-phospho-beta-D-ribosyl)acetamidine + L-glutamate + ADP + phosphate + H(+). Its pathway is purine metabolism; IMP biosynthesis via de novo pathway; 5-amino-1-(5-phospho-D-ribosyl)imidazole from N(2)-formyl-N(1)-(5-phospho-D-ribosyl)glycinamide: step 1/2. Part of the phosphoribosylformylglycinamidine synthase complex involved in the purines biosynthetic pathway. Catalyzes the ATP-dependent conversion of formylglycinamide ribonucleotide (FGAR) and glutamine to yield formylglycinamidine ribonucleotide (FGAM) and glutamate. The FGAM synthase complex is composed of three subunits. PurQ produces an ammonia molecule by converting glutamine to glutamate. PurL transfers the ammonia molecule to FGAR to form FGAM in an ATP-dependent manner. PurS interacts with PurQ and PurL and is thought to assist in the transfer of the ammonia molecule from PurQ to PurL. In Anaeromyxobacter dehalogenans (strain 2CP-1 / ATCC BAA-258), this protein is Phosphoribosylformylglycinamidine synthase subunit PurL.